The following is a 311-amino-acid chain: tRNA-cytidine(32) 2-sulfurtransferase (311 aa).

A PP-loop motif motif is present at residues 47 to 52; the sequence is SGGKDS. The [4Fe-4S] cluster site is built by Cys-122, Cys-125, and Cys-213.

Belongs to the TtcA family. Homodimer. Requires Mg(2+) as cofactor. The cofactor is [4Fe-4S] cluster.

The protein localises to the cytoplasm. It catalyses the reaction cytidine(32) in tRNA + S-sulfanyl-L-cysteinyl-[cysteine desulfurase] + AH2 + ATP = 2-thiocytidine(32) in tRNA + L-cysteinyl-[cysteine desulfurase] + A + AMP + diphosphate + H(+). It functions in the pathway tRNA modification. Catalyzes the ATP-dependent 2-thiolation of cytidine in position 32 of tRNA, to form 2-thiocytidine (s(2)C32). The sulfur atoms are provided by the cysteine/cysteine desulfurase (IscS) system. In Escherichia coli O45:K1 (strain S88 / ExPEC), this protein is tRNA-cytidine(32) 2-sulfurtransferase.